The chain runs to 270 residues: tRNA pseudouridine synthase A (270 aa).

The active-site Nucleophile is D60. Positions 107–111 (FHARF) are RNA binding. Residue Y118 coordinates substrate. An interaction with tRNA region spans residues 168–172 (QCQSR).

Belongs to the tRNA pseudouridine synthase TruA family. In terms of assembly, homodimer.

It carries out the reaction uridine(38/39/40) in tRNA = pseudouridine(38/39/40) in tRNA. In terms of biological role, formation of pseudouridine at positions 38, 39 and 40 in the anticodon stem and loop of transfer RNAs. The chain is tRNA pseudouridine synthase A from Citrobacter koseri (strain ATCC BAA-895 / CDC 4225-83 / SGSC4696).